The sequence spans 225 residues: Membrane protein (225 aa).

Over 1-20 (MPNETNCTLDFEQSVQLFKE) the chain is Virion surface. A helical membrane pass occupies residues 21 to 41 (YNLFITAFLLFLTIILQYGYA). At 42-51 (TRSKVIYTLK) the chain is on the intravirion side. The helical transmembrane segment at 52–72 (MIVLWCFWPLNIAVGVISCTY) threads the bilayer. Over 73-77 (PPNTG) the chain is Virion surface. A helical membrane pass occupies residues 78-98 (GLVAAIILTVFACLSFVGYWI). The Intravirion segment spans residues 99–225 (QSIRLFKRCR…VATGGSSLYT (127 aa)).

Belongs to the gammacoronaviruses M protein family. Homomultimer. Interacts with envelope E protein in the budding compartment of the host cell, which is located between endoplasmic reticulum and the Golgi complex. Forms a complex with HE and S proteins. Interacts with nucleocapsid N protein. This interaction probably participates in RNA packaging into the virus.

It localises to the virion membrane. The protein resides in the host Golgi apparatus membrane. Functionally, component of the viral envelope that plays a central role in virus morphogenesis and assembly via its interactions with other viral proteins. This chain is Membrane protein, found in Avian infectious bronchitis virus (strain Beaudette) (IBV).